A 104-amino-acid chain; its full sequence is Small ribosomal subunit protein bS18c (104 aa).

The tract at residues 84–104 (DKQFERSESTPRTIGLRTRNK) is disordered.

This sequence belongs to the bacterial ribosomal protein bS18 family. In terms of assembly, part of the 30S ribosomal subunit.

It is found in the plastid. The protein localises to the chloroplast. The polypeptide is Small ribosomal subunit protein bS18c (Cucumis sativus (Cucumber)).